Reading from the N-terminus, the 583-residue chain is R-linalool synthase QH5, chloroplastic (583 aa).

The transit peptide at 1-40 (MASISLFPYSILKQTSPLARGTAYNRIYSTKTTGITVDVA) directs the protein to the chloroplast. Positions 298, 335, 339, 476, and 479 each coordinate (2E)-geranyl diphosphate. Positions 335 and 339 each coordinate Mg(2+). The DDXXD motif signature appears at 335-339 (DDVYD). Residues Asp-479, Thr-483, and Glu-487 each contribute to the Mg(2+) site. Residue Asp-492 coordinates K(+).

The protein belongs to the terpene synthase family. Tpsb subfamily. It depends on Mg(2+) as a cofactor. The cofactor is Mn(2+). K(+) is required as a cofactor. In terms of tissue distribution, expressed in every aerial organ except for the stem stele of mature plants. Not detected in roots.

The protein localises to the plastid. It is found in the chloroplast. The catalysed reaction is (2E)-geranyl diphosphate + H2O = (R)-linalool + diphosphate. It participates in secondary metabolite biosynthesis; terpenoid biosynthesis. Functionally, monoterpene synthase that catalyzes the formation of (3R)-linalool from geranyl diphosphate, but not from isopentenyl diphosphate, dimethylallyl diphosphate, chrysanthemyl diphosphate, farnesyl diphosphate, (+)-copalyl diphosphate or geranylgeranyl diphosphate. The polypeptide is R-linalool synthase QH5, chloroplastic (Artemisia annua (Sweet wormwood)).